A 277-amino-acid chain; its full sequence is MEMO1 family protein Tpet_0837 (277 aa).

Belongs to the MEMO1 family.

This chain is MEMO1 family protein Tpet_0837, found in Thermotoga petrophila (strain ATCC BAA-488 / DSM 13995 / JCM 10881 / RKU-1).